A 70-amino-acid chain; its full sequence is UPF0337 protein YjbJ (70 aa).

Belongs to the UPF0337 (CsbD) family.

The sequence is that of UPF0337 protein YjbJ (yjbJ) from Salmonella typhi.